The chain runs to 394 residues: 12-oxophytodienoate reductase 7 (394 aa).

Residues 35-37 and Q110 contribute to the FMN site; that span reads PMT. Position 189 to 192 (189 to 192) interacts with substrate; it reads HGAH. Catalysis depends on Y194, which acts as the Proton donor. R241 is an FMN binding site. R286 serves as a coordination point for substrate. FMN contacts are provided by residues G324 and 345–346; that span reads GR. A Microbody targeting signal motif is present at residues 392–394; that stretch reads SRM.

Belongs to the NADH:flavin oxidoreductase/NADH oxidase family. It depends on FMN as a cofactor.

It localises to the peroxisome. It catalyses the reaction (1S,2S)-OPC-8 + NADP(+) = (9S,13S,15Z)-12-oxophyto-10,15-dienoate + NADPH + H(+). The protein operates within lipid metabolism; oxylipin biosynthesis. Its function is as follows. Involved in the biosynthesis of jasmonate (JA) and perhaps in biosynthesis or metabolism of other oxylipin signaling moleclules. In vitro, reduces cis(+)-12-oxophytodienoic acid (cis(+)-OPDA) and cis(-)-OPDA to cis(+)-OPC-8:0 and cis(-)-OPC-8:0, respectively. May be required for the spatial and temporal regulation of JA levels during dehiscence of anthers, promoting the stomium degeneration program. Involved in carbohydrate transport underlying normal lodicule function during anthesis. The protein is 12-oxophytodienoate reductase 7 of Oryza sativa subsp. japonica (Rice).